Here is an 81-residue protein sequence, read N- to C-terminus: A-kinase anchor protein 7 isoform alpha (81 aa).

G2 carries N-myristoyl glycine lipidation. A required for membrane localization region spans residues 2 to 11 (GQLCCFPFAR). Residues C5 and C6 are each lipidated (S-palmitoyl cysteine). Residues 29 to 42 (LVRLSKRLVENAVL) are RII-binding. The segment at 49 to 81 (LEETQNKKQPGEGNSTKAEEGDRNGDGSDNNRK) is disordered. Positions 65–81 (KAEEGDRNGDGSDNNRK) are enriched in basic and acidic residues.

As to quaternary structure, binds cAMP-dependent protein kinase (PKA). Interacts with PRKCA; only the cytoplasmic form is capable of interacting with PRKCA.

The protein localises to the lateral cell membrane. In terms of biological role, targets the cAMP-dependent protein kinase (PKA) to the plasma membrane, and permits functional coupling to the L-type calcium channel. The membrane-associated form reduces epithelial sodium channel (ENaC) activity, whereas the free cytoplasmic form may negatively regulate ENaC channel feedback inhibition by intracellular sodium. This is A-kinase anchor protein 7 isoform alpha (Akap7) from Mus musculus (Mouse).